Reading from the N-terminus, the 83-residue chain is U2-hexatoxin-Hi1a (83 aa).

The signal sequence occupies residues 1 to 23; that stretch reads MRNTTFLVLNVMLLVSVALFCAA. A propeptide spanning residues 24–45 is cleaved from the precursor; that stretch reads DPEMEKSSFAEILDTGNPEQER. 4 cysteine pairs are disulfide-bonded: C47–C63, C54–C68, C62–C78, and C70–C76.

The protein belongs to the neurotoxin 07 (Beta/delta-agtx) family. As to expression, expressed by the venom gland.

It localises to the secreted. Functionally, inhibits sodium channels (Nav) of insects. The sequence is that of U2-hexatoxin-Hi1a from Hadronyche infensa (Fraser island funnel-web spider).